A 294-amino-acid chain; its full sequence is Protein huluwa (294 aa).

At 1–23 (MSQLGSAVPSSNLPEGLPVSSLA) the chain is on the extracellular side. Residues 24–44 (LLILVLIPCVLLLLLLNCLFV) traverse the membrane as a helical segment. At 45-294 (GYKLFRMTRR…PPITTKQYWV (250 aa)) the chain is on the cytoplasmic side. The segment at 154-175 (SDSDMERVNTVPPNSPVLRVTP) is disordered. The VPPNSP motif signature appears at 164 to 169 (VPPNSP). The SLRRSST motif motif lies at 184–190 (SLRRSST).

It belongs to the huluwa family. As to quaternary structure, interacts with axin1; leading to promote the tankyrase-mediated degradation of axin. Interacts with axin2; leading to promote the tankyrase-mediated degradation of axin.

It is found in the cell membrane. Its function is as follows. Key maternal determinant of the dorsal organizer and body axis formation in vertebrates that acts by promoting stabilization of beta-catenin (ctnnb1). Localizes on the plasma membrane of the future dorsal blastomeres in early blastulas and binds to and promotes the tankyrase-mediated degradation of axin (axin1 and axin2). Axin degradation results in stabilization and nuclear translocation of beta-catenin (ctnnb1) for activating organizer-specific target gene expression. The sequence is that of Protein huluwa from Danio rerio (Zebrafish).